The primary structure comprises 326 residues: Flavanone 3-dioxygenase 3 (326 aa).

Positions Met1–Ser15 are enriched in polar residues. The disordered stretch occupies residues Met1–Pro21. The region spanning Glu175–Phe276 is the Fe2OG dioxygenase domain. Residues His200, Asp202, and His257 each contribute to the Fe cation site. Arg267 contacts 2-oxoglutarate.

Belongs to the iron/ascorbate-dependent oxidoreductase family. The cofactor is Fe(2+). L-ascorbate serves as cofactor. Expressed at very low levels in roots, leaves, stems and seeds.

The enzyme catalyses a (2S)-flavan-4-one + 2-oxoglutarate + O2 = a (2R,3R)-dihydroflavonol + succinate + CO2. It functions in the pathway secondary metabolite biosynthesis; flavonoid biosynthesis. In terms of biological role, catalyzes the 3-beta-hydroxylation of 2S-flavanones to 2R,3R-dihydroflavonols which are intermediates in the biosynthesis of flavonols, anthocyanidins, catechins and proanthocyanidins in plants. Converts (2S)-eriodictyol to (+)-taxifolin and (2S)-naringenin to (+)-(2R/3R)-dihydrokaempferol in vitro. This is Flavanone 3-dioxygenase 3 from Oryza sativa subsp. japonica (Rice).